The chain runs to 602 residues: Arp2/3 complex-activating protein rickA (602 aa).

Disordered regions lie at residues 307-484 (SSLA…AGPK), 516-535 (VEFD…KPVQ), and 555-602 (MSDS…SFVK). A compositionally biased stretch (pro residues) spans 318–442 (TPPPPLPGNN…IPPPPPPPMA (125 aa)). WH2 domains lie at 472 to 489 (DTSD…LRKV) and 499 to 516 (SRDL…LKKV). The segment covering 475–484 (DLMREIAGPK) has biased composition (basic and acidic residues). The segment at 537–570 (VNKLSGVASILARRVVMEMSDSSGSESDSGNWSD) is central and acidic domains. The segment covering 555–566 (MSDSSGSESDSG) has biased composition (low complexity). Residues 578–590 (KTLKTKRERRKIL) are compositionally biased toward basic residues. The span at 591 to 602 (NNRNSQKPSFVK) shows a compositional bias: polar residues.

In terms of assembly, homodimer.

Its subcellular location is the cell surface. Functionally, recruits and activates the Arp2/3 complex, which in turn leads to actin polymerization, promoting Rickettsia motility during infection. This Rickettsia montanensis protein is Arp2/3 complex-activating protein rickA (rickA).